Reading from the N-terminus, the 253-residue chain is 5-oxoprolinase subunit A (253 aa).

Belongs to the LamB/PxpA family. Forms a complex composed of PxpA, PxpB and PxpC.

The enzyme catalyses 5-oxo-L-proline + ATP + 2 H2O = L-glutamate + ADP + phosphate + H(+). In terms of biological role, catalyzes the cleavage of 5-oxoproline to form L-glutamate coupled to the hydrolysis of ATP to ADP and inorganic phosphate. This Azorhizobium caulinodans (strain ATCC 43989 / DSM 5975 / JCM 20966 / LMG 6465 / NBRC 14845 / NCIMB 13405 / ORS 571) protein is 5-oxoprolinase subunit A.